Reading from the N-terminus, the 218-residue chain is MGQKINPTGLRVGIIKDWESRWFADKDYADLLHEDYVVREYIEKRLKDASVSKVEIERAANRLNISLHTAKPGMVIGKGGSEIETLRTDITNLAKGKRVHVNVVEVKNPDAVAKLVAENIARQLEGRVSFRRAMKQSIQRSMRSGIKGIKTEVSGRLGGADIARSEKYSEGTVPLHTLRADIDYGTAEADTTYGKIGVKVWLHHGEVLPTKKAASNEQ.

The KH type-2 domain maps to 38–107 (VREYIEKRLK…RVHVNVVEVK (70 aa)).

Belongs to the universal ribosomal protein uS3 family. In terms of assembly, part of the 30S ribosomal subunit. Forms a tight complex with proteins S10 and S14.

Its function is as follows. Binds the lower part of the 30S subunit head. Binds mRNA in the 70S ribosome, positioning it for translation. This is Small ribosomal subunit protein uS3 from Exiguobacterium sibiricum (strain DSM 17290 / CCUG 55495 / CIP 109462 / JCM 13490 / 255-15).